The primary structure comprises 284 residues: Pantothenate synthetase (284 aa).

Residue 30-37 coordinates ATP; the sequence is MGFLHEGH. His37 (proton donor) is an active-site residue. (R)-pantoate is bound at residue Gln61. Residue Gln61 participates in beta-alanine binding. An ATP-binding site is contributed by 147-150; it reads GRKD. Gln153 contacts (R)-pantoate. Residues Val176 and 184 to 187 each bind ATP; that span reads MSSR.

It belongs to the pantothenate synthetase family. In terms of assembly, homodimer.

Its subcellular location is the cytoplasm. It catalyses the reaction (R)-pantoate + beta-alanine + ATP = (R)-pantothenate + AMP + diphosphate + H(+). It participates in cofactor biosynthesis; (R)-pantothenate biosynthesis; (R)-pantothenate from (R)-pantoate and beta-alanine: step 1/1. In terms of biological role, catalyzes the condensation of pantoate with beta-alanine in an ATP-dependent reaction via a pantoyl-adenylate intermediate. The protein is Pantothenate synthetase of Pelobacter propionicus (strain DSM 2379 / NBRC 103807 / OttBd1).